We begin with the raw amino-acid sequence, 569 residues long: Proline--tRNA ligase (569 aa).

The protein belongs to the class-II aminoacyl-tRNA synthetase family. ProS type 1 subfamily. As to quaternary structure, homodimer.

Its subcellular location is the cytoplasm. It catalyses the reaction tRNA(Pro) + L-proline + ATP = L-prolyl-tRNA(Pro) + AMP + diphosphate. Its function is as follows. Catalyzes the attachment of proline to tRNA(Pro) in a two-step reaction: proline is first activated by ATP to form Pro-AMP and then transferred to the acceptor end of tRNA(Pro). As ProRS can inadvertently accommodate and process non-cognate amino acids such as alanine and cysteine, to avoid such errors it has two additional distinct editing activities against alanine. One activity is designated as 'pretransfer' editing and involves the tRNA(Pro)-independent hydrolysis of activated Ala-AMP. The other activity is designated 'posttransfer' editing and involves deacylation of mischarged Ala-tRNA(Pro). The misacylated Cys-tRNA(Pro) is not edited by ProRS. The chain is Proline--tRNA ligase from Desulforamulus reducens (strain ATCC BAA-1160 / DSM 100696 / MI-1) (Desulfotomaculum reducens).